The following is a 353-amino-acid chain: MTMKMMVHIYFVSLSLLLLLFHSYAIDIENEITEFFNKMRDTLPAKDSKWLNPACMFGGTMNDMATLGEPFSAKCPPIEDSLLSHRYKDYVVKWERLEKNRRRQVSNKRVKHGDLWIANYTSKFSNRRYLCTVTTKNGDCVQGIVRSHIKKPPSCIPKTYELGTHDKYGIDLYCGILYAKHYNNITWYKDNKEINIDDIKYSQTGKELIIHNPELEDSGRYDCYVHYDDVRIKNDIVVSRCKILTVIPSQDHRFKLILDPKINVTIGEPANITCTAVSTSLLIDDVLIEWENPSGWLIGFDFDVYSVLTSRGGITEATLYFENVTEEYIGNTYKCRGHNYYFEKTLTTTVVLE.

A signal peptide spans 1 to 21 (MTMKMMVHIYFVSLSLLLLLF). Ig-like C2-type domains lie at 67–139 (LGEP…KNGD) and 157–239 (PKTY…IVVS). Intrachain disulfides connect C75–C131 and C174–C223. Residues N119, N184, N263, N271, and N323 are each glycosylated (N-linked (GlcNAc...) asparagine; by host). One can recognise an Ig-like V-type domain in the interval 248 to 347 (PSQDHRFKLI…HNYYFEKTLT (100 aa)). C274 and C335 are oxidised to a cystine.

It belongs to the interleukin-1 receptor family. In terms of assembly, interacts with host IFNA1.

It localises to the secreted. Its function is as follows. Counteracts the antiviral effects of host IFN-alpha/beta and key IFN-inducible proteins involved in viral RNA degradation suxh as host OAS1. Acts as a soluble IFN-alpha receptor and thus inhibits the interaction between host IFN-alpha and its receptor. The sequence is that of Soluble interferon alpha/beta receptor OPG204 (OPG204) from Homo sapiens (Human).